The chain runs to 119 residues: Amicyanin-alpha (119 aa).

Residues 1–20 form the signal peptide; the sequence is MRALAFAAALAAFSATAALA. Positions 21 to 119 constitute a Plastocyanin-like domain; sequence AGALEAVQEA…PFMKGKVVVE (99 aa). Residues H67, C106, H109, and M112 each contribute to the Cu cation site.

Requires Cu cation as cofactor.

It localises to the periplasm. It functions in the pathway one-carbon metabolism; methylamine degradation. Its function is as follows. Primary acceptor of electrons from methylamine dehydrogenase. Passes those electrons on either a soluble cytochrome c or to pseudoazurin. In Methylorubrum extorquens (strain ATCC 14718 / DSM 1338 / JCM 2805 / NCIMB 9133 / AM1) (Methylobacterium extorquens), this protein is Amicyanin-alpha (mauC).